Here is a 145-residue protein sequence, read N- to C-terminus: D-aminoacyl-tRNA deacylase (145 aa).

The Gly-cisPro motif, important for rejection of L-amino acids signature appears at 137–138 (GP).

It belongs to the DTD family. As to quaternary structure, homodimer.

The protein localises to the cytoplasm. The catalysed reaction is glycyl-tRNA(Ala) + H2O = tRNA(Ala) + glycine + H(+). It carries out the reaction a D-aminoacyl-tRNA + H2O = a tRNA + a D-alpha-amino acid + H(+). Functionally, an aminoacyl-tRNA editing enzyme that deacylates mischarged D-aminoacyl-tRNAs. Also deacylates mischarged glycyl-tRNA(Ala), protecting cells against glycine mischarging by AlaRS. Acts via tRNA-based rather than protein-based catalysis; rejects L-amino acids rather than detecting D-amino acids in the active site. By recycling D-aminoacyl-tRNA to D-amino acids and free tRNA molecules, this enzyme counteracts the toxicity associated with the formation of D-aminoacyl-tRNA entities in vivo and helps enforce protein L-homochirality. This Pseudomonas aeruginosa (strain UCBPP-PA14) protein is D-aminoacyl-tRNA deacylase.